Here is a 419-residue protein sequence, read N- to C-terminus: Tyrosine--tRNA ligase 2 (419 aa).

Tyr34 provides a ligand contact to L-tyrosine. The 'HIGH' region signature appears at 39–48; the sequence is PTGDSMHIGH. Positions 168 and 172 each coordinate L-tyrosine. The short motif at 230–234 is the 'KMSKS' region element; the sequence is KFGKS. ATP is bound at residue Lys233. Residues 352 to 418 form the S4 RNA-binding domain; it reads KNIVEWLVDL…GKKNYSLVKL (67 aa).

It belongs to the class-I aminoacyl-tRNA synthetase family. TyrS type 1 subfamily. In terms of assembly, homodimer.

It is found in the cytoplasm. The catalysed reaction is tRNA(Tyr) + L-tyrosine + ATP = L-tyrosyl-tRNA(Tyr) + AMP + diphosphate + H(+). Catalyzes the attachment of tyrosine to tRNA(Tyr) in a two-step reaction: tyrosine is first activated by ATP to form Tyr-AMP and then transferred to the acceptor end of tRNA(Tyr). This chain is Tyrosine--tRNA ligase 2, found in Bacillus anthracis.